Reading from the N-terminus, the 308-residue chain is Tetraacyldisaccharide 4'-kinase (308 aa).

63–70 (SFGGNGKT) serves as a coordination point for ATP.

This sequence belongs to the LpxK family.

The catalysed reaction is a lipid A disaccharide + ATP = a lipid IVA + ADP + H(+). Its pathway is glycolipid biosynthesis; lipid IV(A) biosynthesis; lipid IV(A) from (3R)-3-hydroxytetradecanoyl-[acyl-carrier-protein] and UDP-N-acetyl-alpha-D-glucosamine: step 6/6. In terms of biological role, transfers the gamma-phosphate of ATP to the 4'-position of a tetraacyldisaccharide 1-phosphate intermediate (termed DS-1-P) to form tetraacyldisaccharide 1,4'-bis-phosphate (lipid IVA). The polypeptide is Tetraacyldisaccharide 4'-kinase (Campylobacter jejuni subsp. doylei (strain ATCC BAA-1458 / RM4099 / 269.97)).